A 106-amino-acid polypeptide reads, in one-letter code: UPF0145 protein VV2_1464 (106 aa).

It belongs to the UPF0145 family.

This is UPF0145 protein VV2_1464 from Vibrio vulnificus (strain CMCP6).